A 486-amino-acid chain; its full sequence is Vesicular GABA transporter (486 aa).

The Cytoplasmic portion of the chain corresponds to 1-93; it reads MASNRFQNLQ…EASEPISALQ (93 aa). Polar residues predominate over residues 29–46; that stretch reads LNEVPSYQNQPQTGESGS. The tract at residues 29–85 is disordered; sequence LNEVPSYQNQPQTGESGSNPPPHDRLEPIQESVVSEQPQKDDINKQEEAKDDGHGEA. Residues 66–85 show a composition bias toward basic and acidic residues; the sequence is PQKDDINKQEEAKDDGHGEA. Residues 94-114 form a helical membrane-spanning segment; the sequence is AAWNVTNAIQGMFIVGLPIAV. The Lumenal, vesicle portion of the chain corresponds to 115 to 119; it reads KVGGW. The chain crosses the membrane as a helical span at residues 120 to 140; that stretch reads WSIGAMVGVAYVCYWTGVLLI. Over 141 to 167 the chain is Cytoplasmic; it reads ECLYENGVKKRKTYREIADFYKPGFGK. The chain crosses the membrane as a helical span at residues 168–188; it reads WVLAAQLTELLSTCIIYLVLA. Residues 189–203 are Lumenal, vesicle-facing; it reads ADLLQSCFPSVDKAG. A helical transmembrane segment spans residues 204–224; that stretch reads WMMITSASLLTCSFLDDLQIV. Over 225–228 the chain is Cytoplasmic; the sequence is SRLS. A helical transmembrane segment spans residues 229-249; it reads FFNAISHLIVNLIMVLYCLSF. The Lumenal, vesicle segment spans residues 250 to 263; the sequence is VSQWSFSTITFSLN. The helical transmembrane segment at 264–284 threads the bilayer; it reads INTLPTIVGMVVFGYTSHIFL. Residues 285 to 305 are Cytoplasmic-facing; it reads PNLEGNMKNPAQFNVMLKWSH. The helical transmembrane segment at 306 to 326 threads the bilayer; it reads IAAAVFKVVFGMLGFLTFGEL. The Lumenal, vesicle segment spans residues 327–341; it reads TQEEISNSLPNQSFK. N-linked (GlcNAc...) asparagine glycosylation is present at Asn337. A helical membrane pass occupies residues 342 to 362; the sequence is ILVNLILVVKALLSYPLPFYA. Topologically, residues 363 to 398 are cytoplasmic; sequence AVQLLKNNLFLGYPQTPFTSCYSPDKSLREWAVTLR. The helical transmembrane segment at 399 to 419 threads the bilayer; the sequence is IILVLFTLFVALSVPYLVELM. The Lumenal, vesicle segment spans residues 420–421; that stretch reads GL. A helical transmembrane segment spans residues 422-442; the sequence is VGNITGTMLSFIWPALFHLYI. The Cytoplasmic portion of the chain corresponds to 443-457; the sequence is KEKTLNNFEKRFDQG. The helical transmembrane segment at 458-478 threads the bilayer; sequence IIIMGCSVCISGVYFSSMELL. At 479 to 486 the chain is on the lumenal, vesicle side; the sequence is RAINSADS.

Belongs to the amino acid/polyamine transporter 2 family.

It localises to the cytoplasmic vesicle membrane. Its function is as follows. Involved in the uptake of GABA into the synaptic vesicles. In Caenorhabditis elegans, this protein is Vesicular GABA transporter (unc-47).